The primary structure comprises 206 residues: Ras-related protein ralB-A (206 aa).

21–28 (GSGGVGKS) contacts GTP. Residues 43–51 (YEPTKADSY) carry the Effector region motif. Residues 68-72 (DTAGQ) and 128-131 (NKSD) each bind GTP. Over residues 180–189 (KMSENKDKNG) the composition is skewed to basic and acidic residues. Residues 180–206 (KMSENKDKNGKKSGKSKKGFKQRCCLL) are disordered. Residues 190–200 (KKSGKSKKGFK) show a composition bias toward basic residues. A Cysteine methyl ester modification is found at Cys203. Cys203 is lipidated: S-geranylgeranyl cysteine. Residues 204-206 (CLL) constitute a propeptide, removed in mature form.

This sequence belongs to the small GTPase superfamily. Ras family. As to quaternary structure, interacts with ralbp1 and rap1gds1. In terms of tissue distribution, weakly expressed in adult tissues and highest levels were found in heart, brain and testes.

The protein localises to the cell membrane. It is found in the midbody. The enzyme catalyses GTP + H2O = GDP + phosphate + H(+). Its function is as follows. Multifunctional GTPase involved in a variety of cellular processes including gene expression, cell migration, cell proliferation, oncogenic transformation and membrane trafficking. Accomplishes its multiple functions by interacting with distinct downstream effectors. Acts as a GTP sensor for GTP-dependent exocytosis of dense core vesicles. Required both to stabilize the assembly of the exocyst complex and to localize functional exocyst complexes to the leading edge of migrating cells. Required for suppression of apoptosis. In late stages of cytokinesis, upon completion of the bridge formation between dividing cells, mediates exocyst recruitment to the midbody to drive abscission. Regulates the actin cytoskeleton to play a role in gastrulation or neurulation. During the cleavage stages, the GTP-bound form induces a cortical reaction that affects the localization of pigment granules. Activated by the FGF pathway via ras and ral-GDS, but independently of raf. Directs ralbp1 to the plasma membrane. Involved in ligand-dependent receptor mediated endocytosis of the EGF and insulin receptors. In Xenopus laevis (African clawed frog), this protein is Ras-related protein ralB-A (ralb-a).